A 54-amino-acid chain; its full sequence is Large ribosomal subunit protein bL33 (54 aa).

This sequence belongs to the bacterial ribosomal protein bL33 family.

The protein is Large ribosomal subunit protein bL33 of Thermobifida fusca (strain YX).